The chain runs to 358 residues: Transmembrane protein 144 homolog B (358 aa).

The next 10 helical transmembrane spans lie at 6–26, 35–55, 60–79, 86–108, 122–142, 211–231, 244–264, 279–299, 307–327, and 337–357; these read VIGYIGAAVASLFFGSNYVPV, LAFTWVMSVGTLVVAYCAMFI, IFDPWGLLGGTLWSIGNFCV, IGIGLGLLLWCCSSIITGYFTGK, PALNWIGFACIVAAVIFFFFI, ILGIVLSVFSGIMYGVNMVPM, LSFVFCHFSGIFLANTAVFIV, IFPSFFSGLLWGIANVGLMVA, IGFPMGSGGPMIVSSLWSVFY, and LLILLISFIFLGAGITILALS.

The protein belongs to the TMEM144 family.

Its subcellular location is the membrane. The chain is Transmembrane protein 144 homolog B (tmem144B) from Dictyostelium discoideum (Social amoeba).